Reading from the N-terminus, the 170-residue chain is Universal stress protein MJ0531 (170 aa).

It belongs to the universal stress protein A family.

This is Universal stress protein MJ0531 from Methanocaldococcus jannaschii (strain ATCC 43067 / DSM 2661 / JAL-1 / JCM 10045 / NBRC 100440) (Methanococcus jannaschii).